A 565-amino-acid chain; its full sequence is Proline--tRNA ligase (565 aa).

It belongs to the class-II aminoacyl-tRNA synthetase family. ProS type 1 subfamily. Homodimer.

It localises to the cytoplasm. The enzyme catalyses tRNA(Pro) + L-proline + ATP = L-prolyl-tRNA(Pro) + AMP + diphosphate. Catalyzes the attachment of proline to tRNA(Pro) in a two-step reaction: proline is first activated by ATP to form Pro-AMP and then transferred to the acceptor end of tRNA(Pro). As ProRS can inadvertently accommodate and process non-cognate amino acids such as alanine and cysteine, to avoid such errors it has two additional distinct editing activities against alanine. One activity is designated as 'pretransfer' editing and involves the tRNA(Pro)-independent hydrolysis of activated Ala-AMP. The other activity is designated 'posttransfer' editing and involves deacylation of mischarged Ala-tRNA(Pro). The misacylated Cys-tRNA(Pro) is not edited by ProRS. The protein is Proline--tRNA ligase of Francisella tularensis subsp. tularensis (strain FSC 198).